Reading from the N-terminus, the 158-residue chain is NAD(P)H-quinone oxidoreductase subunit J, chloroplastic (158 aa).

It belongs to the complex I 30 kDa subunit family. As to quaternary structure, NDH is composed of at least 16 different subunits, 5 of which are encoded in the nucleus.

It localises to the plastid. The protein localises to the chloroplast thylakoid membrane. It catalyses the reaction a plastoquinone + NADH + (n+1) H(+)(in) = a plastoquinol + NAD(+) + n H(+)(out). It carries out the reaction a plastoquinone + NADPH + (n+1) H(+)(in) = a plastoquinol + NADP(+) + n H(+)(out). NDH shuttles electrons from NAD(P)H:plastoquinone, via FMN and iron-sulfur (Fe-S) centers, to quinones in the photosynthetic chain and possibly in a chloroplast respiratory chain. The immediate electron acceptor for the enzyme in this species is believed to be plastoquinone. Couples the redox reaction to proton translocation, and thus conserves the redox energy in a proton gradient. This is NAD(P)H-quinone oxidoreductase subunit J, chloroplastic from Nicotiana tabacum (Common tobacco).